Reading from the N-terminus, the 416-residue chain is Cysteate synthase (416 aa).

K104 bears the N6-(pyridoxal phosphate)lysine mark. N130 is a binding site for pyridoxal 5'-phosphate.

Belongs to the threonine synthase family. Cysteate synthase subfamily. Homotrimer. It depends on pyridoxal 5'-phosphate as a cofactor.

It catalyses the reaction O-phospho-L-serine + sulfite + H(+) = L-cysteate + phosphate. It functions in the pathway cofactor biosynthesis; coenzyme M biosynthesis. Specifically catalyzes the beta-elimination of phosphate from L-phosphoserine and the beta-addition of sulfite to the dehydroalanine intermediate to produce L-cysteate. The protein is Cysteate synthase of Methanosarcina mazei (strain ATCC BAA-159 / DSM 3647 / Goe1 / Go1 / JCM 11833 / OCM 88) (Methanosarcina frisia).